A 262-amino-acid chain; its full sequence is ATP synthase subunit a (262 aa).

Helical transmembrane passes span 30–50, 64–84, 91–111, 123–143, 149–169, 195–215, and 220–240; these read ITSLTNIAILFIIGLLVLTIF, WNIVLETWVASILGIVKDQIG, LIYFPLIFTFFSFVFISNILG, ISVTLGLSIAIMIGVTLIGFS, FFSLFVPKGTPLALVPLLVLI, LFGVISALSVSACIAVSSLLL, and ITLPLAVLVVLYGLELLVALL.

Belongs to the ATPase A chain family. As to quaternary structure, F-type ATPases have 2 components, CF(1) - the catalytic core - and CF(0) - the membrane proton channel. CF(1) has five subunits: alpha(3), beta(3), gamma(1), delta(1), epsilon(1). CF(0) has three main subunits: a, b and c.

The protein localises to the mitochondrion inner membrane. In terms of biological role, mitochondrial membrane ATP synthase (F(1)F(0) ATP synthase or Complex V) produces ATP from ADP in the presence of a proton gradient across the membrane which is generated by electron transport complexes of the respiratory chain. F-type ATPases consist of two structural domains, F(1) - containing the extramembraneous catalytic core and F(0) - containing the membrane proton channel, linked together by a central stalk and a peripheral stalk. During catalysis, ATP synthesis in the catalytic domain of F(1) is coupled via a rotary mechanism of the central stalk subunits to proton translocation. Key component of the proton channel; it may play a direct role in the translocation of protons across the membrane. This chain is ATP synthase subunit a (ATP6), found in Allomyces macrogynus.